We begin with the raw amino-acid sequence, 882 residues long: MEPTAGSEKESEGDTVTGECVNRIPVPRPPSIEEFTIVKPISRGAFGKVYLGQKGGKLYAVKVVKKADMINKNMTHQVQAERDALALSKSPFIVHLYYSLQSANNVYLVMEYLIGGDVKSLLHIYGYFDEEMAVKYISEVALALDYLHRHGIIHRDLKPDNMLISNEGHIKLTDFGLSKVTLNRDINMMDILTTPSMAKPRQDYSRTPGQVLSLISSLGFFTPVAEKNKDSANILSTHVSETSQLSQGLVCPMSVDHRDTTPYSSKLLNSCLETVAPNPGMPVKCLTSHLLQSRRRLATSSASSQSHTFVSSVESECHSSPRWEKDCQESDHALGYTVMSWNIIEKPSCTDSRDAIETKGFNKKDLELALSPIHNSSTIPETGRSCVNLAKKGFPGEVSWEARELDINNIHVATDTAQSGFHQSDQWAVDSGDATEEHLGKRGFKRNFELVDSSPCQNIIQHKKNCIEHKPRNAMSDGYINQRTGLTTEVQDLKLSVCGGQQSDCANKENMVNSFIDKPQTPEKSPVPMIAKNLLCELDEDCDKNNKRDLLSSSLLCSDDERASKSICMDSDSSFPGISVMESSLERQSLDPDKSIKESSFEESNIEDLLTVSPRWQENILPKGDENPAVQDSSQKMLAPSSKVLKTLTLSKRNAVAFRSFNSHINASNNSEPSKMSLTSLDGMDISCVYSGSYPMAITPNQKGTSYIPYQQTPNQVKSGTPYRTPKSVRRGAAPVDDGRILGTPDYLAPELLLGRAHGPAVDWWALGVCLFEFLTGIPPFNDETPQQVFQNILKRDIPWPEGEEKLSDNSQNAVEILLTIDNAKRAGMKELKRHHLFSDVDWENLQHQTMPFIPQPDDETDTSYFEARNNAQHLTISGFSL.

Met1 is subject to N-acetylmethionine. Positions 35–838 constitute a Protein kinase domain; it reads FTIVKPISRG…MKELKRHHLF (804 aa). ATP is bound by residues 41-49 and Lys62; that span reads ISRGAFGKV. Asp156 acts as the Proton acceptor in catalysis. Phosphothreonine is present on residues Thr207 and Thr222. Phosphoserine occurs at positions 293, 371, and 454. Residue Thr521 is modified to Phosphothreonine. 5 positions are modified to phosphoserine: Ser554, Ser558, Ser633, Ser660, and Ser671. A disordered region spans residues 713–736; sequence TPNQVKSGTPYRTPKSVRRGAAPV. A Phosphothreonine modification is found at Thr725. Ser728 is modified (phosphoserine). Residue Thr744 is modified to Phosphothreonine; by CDK1. Residues 839–882 enclose the AGC-kinase C-terminal domain; the sequence is SDVDWENLQHQTMPFIPQPDDETDTSYFEARNNAQHLTISGFSL. A phosphoserine mark is found at Ser878 and Ser881.

Belongs to the protein kinase superfamily. AGC Ser/Thr protein kinase family. Post-translationally, phosphorylation at Thr-744 by CDK1 during M phase activates its kinase activity. Maximum phosphorylation occurs in prometaphase.

The protein localises to the cytoplasm. The protein resides in the cytoskeleton. It is found in the microtubule organizing center. Its subcellular location is the centrosome. It localises to the nucleus. It carries out the reaction L-seryl-[protein] + ATP = O-phospho-L-seryl-[protein] + ADP + H(+). The enzyme catalyses L-threonyl-[protein] + ATP = O-phospho-L-threonyl-[protein] + ADP + H(+). Functionally, serine/threonine kinase that plays a key role in M phase by acting as a regulator of mitosis entry and maintenance. Acts by promoting the inactivation of protein phosphatase 2A (PP2A) during M phase: does not directly inhibit PP2A but acts by mediating phosphorylation and subsequent activation of ARPP19 and ENSA at 'Ser-62' and 'Ser-67', respectively. ARPP19 and ENSA are phosphatase inhibitors that specifically inhibit the PPP2R2D (PR55-delta) subunit of PP2A. Inactivation of PP2A during M phase is essential to keep cyclin-B1-CDK1 activity high. Following DNA damage, it is also involved in checkpoint recovery by being inhibited. The chain is Serine/threonine-protein kinase greatwall (MASTL) from Ailuropoda melanoleuca (Giant panda).